The sequence spans 156 residues: Phosphopantetheine adenylyltransferase (156 aa).

A substrate-binding site is contributed by Thr9. Residues 9–10 (TF) and His17 contribute to the ATP site. 3 residues coordinate substrate: Lys41, Leu73, and Arg87. Residues 88–90 (GVR), Glu98, and 123–129 (WAFVSST) contribute to the ATP site.

Belongs to the bacterial CoaD family. In terms of assembly, homohexamer. The cofactor is Mg(2+).

The protein resides in the cytoplasm. It catalyses the reaction (R)-4'-phosphopantetheine + ATP + H(+) = 3'-dephospho-CoA + diphosphate. It participates in cofactor biosynthesis; coenzyme A biosynthesis; CoA from (R)-pantothenate: step 4/5. In terms of biological role, reversibly transfers an adenylyl group from ATP to 4'-phosphopantetheine, yielding dephospho-CoA (dPCoA) and pyrophosphate. The polypeptide is Phosphopantetheine adenylyltransferase (Haemophilus influenzae (strain 86-028NP)).